We begin with the raw amino-acid sequence, 198 residues long: Cytokinin riboside 5'-monophosphate phosphoribohydrolase (198 aa).

Residues Glu-91, 109 to 110, 126 to 132, and Thr-138 each bind substrate; these read RK and GVGTAEE.

This sequence belongs to the LOG family.

The catalysed reaction is N(6)-(dimethylallyl)adenosine 5'-phosphate + H2O = N(6)-dimethylallyladenine + D-ribose 5-phosphate. It carries out the reaction 9-ribosyl-trans-zeatin 5'-phosphate + H2O = trans-zeatin + D-ribose 5-phosphate. Functionally, catalyzes the hydrolytic removal of ribose 5'-monophosphate from nitrogen N6-modified adenosines, the final step of bioactive cytokinin synthesis. The sequence is that of Cytokinin riboside 5'-monophosphate phosphoribohydrolase (fas6) from Rhodococcoides fascians (Rhodococcus fascians).